Reading from the N-terminus, the 228-residue chain is uncharacterized protein (228 aa).

The segment at Ser194 to Glu228 is disordered.

This is an uncharacterized protein from Treponema pallidum (strain Nichols).